The chain runs to 290 residues: Taxis protein CheF1 (290 aa).

Interacts with chemotaxis (Che) proteins as well as flagella accessory (Fla) proteins.

Functionally, involved in taxis signal transduction. Essential for the ability to control the direction of flagellar rotation. May have a role between CheY and the flagellum. The chain is Taxis protein CheF1 (cheF1) from Halobacterium salinarum (strain ATCC 29341 / DSM 671 / R1).